The following is a 713-amino-acid chain: Protein argonaute (713 aa).

The N-terminal domain stretch occupies residues 18–129; sequence EFIPKEVHFY…IKNIRKHKVV (112 aa). The region spanning 164-257 is the PAZ domain; it reads HLWDFVNRDK…FAPQFCNLVF (94 aa). The interval 213–218 is binds 3'-end of gDNA; that stretch reads HIIKYY. The tract at residues 346–488 is mid domain; sequence DVPEIIRNKN…QIMGKLGIKY (143 aa). A Piwi domain is found at 426-699; that stretch reads CFALIIGKEK…FVKALGKNWK (274 aa). Q457, Q479, and K483 together coordinate a divalent metal cation. The interval 457–460 is binds 5'-phosphorylated end of gDNA; the sequence is QNIL. Active-site residues include D504, E541, and D570. A Mn(2+)-binding site is contributed by D504. D570 provides a ligand contact to Mn(2+). 2 binds 5'-phosphorylated end of gDNA regions span residues 625 to 632 and 678 to 679; these read HKTPFGSN and LR. Residue D688 is part of the active site. The Mn(2+) site is built by D688 and I713.

This sequence belongs to the argonaute family. Long pAgo subfamily. The cofactor is a divalent metal cation.

With respect to regulation, DNA cleavage is inhibited by EDTA. In terms of biological role, a DNA-guided ssDNA endonuclease that may play a role in defense against invading genetic elements. Uses short ssDNA sequences as guides (gDNA) to bind complementary target strands, resulting in slicing of the target DNA (tDNA). Endonucleolytically cleaves tDNA (the gDNA indicates where to cleave); two major and two minor products are seen which correspond to cleavage sites between nucleotides 9/10, 10/11, 13/14, and 14/15 downstream of the target residue base-paired with the 5'-end of the gDNA. Efficient guide-dependent tDNA cleavage requires a minimal length of 15 bp and is maximal at 19 bp. Prefers gDNA with 5'-phosphorylated purines and 3'-pyrimidines; changing these bases alters the cleavage activity and patterns. Also has guide-independent activity on tDNA called 'chopping'. Probably a first round of guide-independent activity on an invading plasmid or virus would generate guide DNAs for subsequent, more efficient, guide-dependent degradation of invading nucleic acids. Has no activity on substrate with a mismatch at positions 10 and 11, on ssDNA or RNA, nor on DNA:RNA hybrids. Digests longer (750 bp) dsDNA as well as circular plasmid and naked genomic DNA, but not chromatin, in a guide DNA-independent manner. Addition of endogenous histone A3 protects DNA from cleavage, while cleavage is insensitive to methylation. When plasmid encoding active or mutated protein (Ala-541) is transformed into Sulfolobus acidocaldarius about 25-fold fewer transformants are found with active protein; reduced levels of plasmid are found in wild-type transformed cells. While S.acidocaldarius grows at a similar temperature to M.jannaschii (70 to 80 degrees Celsius) it has very different histone-like proteins, which presumably do not protect against MjAgo. Binds ssDNA, dsDNA and DNA-RNA hybrids; binding is most efficient with dsDNA. In Methanocaldococcus jannaschii (strain ATCC 43067 / DSM 2661 / JAL-1 / JCM 10045 / NBRC 100440) (Methanococcus jannaschii), this protein is Protein argonaute.